The following is a 150-amino-acid chain: Mediator of RNA polymerase II transcription subunit 22a (150 aa).

Residues 99–127 (SLNDHVEQRIAEFDQEAEKTNRLLARIAD) are a coiled coil.

The protein belongs to the Mediator complex subunit 22 family. Component of the Mediator complex.

It is found in the nucleus. In terms of biological role, component of the Mediator complex, a coactivator involved in the regulated transcription of nearly all RNA polymerase II-dependent genes. Mediator functions as a bridge to convey information from gene-specific regulatory proteins to the basal RNA polymerase II transcription machinery. The Mediator complex, having a compact conformation in its free form, is recruited to promoters by direct interactions with regulatory proteins and serves for the assembly of a functional preinitiation complex with RNA polymerase II and the general transcription factors. This is Mediator of RNA polymerase II transcription subunit 22a (MED22A) from Arabidopsis thaliana (Mouse-ear cress).